We begin with the raw amino-acid sequence, 361 residues long: Phospho-N-acetylmuramoyl-pentapeptide-transferase (361 aa).

The next 10 membrane-spanning stretches (helical) occupy residues 28 to 48 (LAII…IKFL), 74 to 94 (TMGG…LADL), 99 to 119 (IWIT…DDYA), 133 to 153 (SKFL…EYLD), 168 to 188 (LSLD…VGSS), 203 to 223 (VPIA…GNLI), 236 to 256 (TGEL…FLWF), 263 to 283 (VFMG…ISVI), 288 to 308 (IVLA…ILQV), and 338 to 358 (KVVI…LSSL).

Belongs to the glycosyltransferase 4 family. MraY subfamily. Mg(2+) is required as a cofactor.

It localises to the cell inner membrane. It catalyses the reaction UDP-N-acetyl-alpha-D-muramoyl-L-alanyl-gamma-D-glutamyl-meso-2,6-diaminopimeloyl-D-alanyl-D-alanine + di-trans,octa-cis-undecaprenyl phosphate = di-trans,octa-cis-undecaprenyl diphospho-N-acetyl-alpha-D-muramoyl-L-alanyl-D-glutamyl-meso-2,6-diaminopimeloyl-D-alanyl-D-alanine + UMP. It participates in cell wall biogenesis; peptidoglycan biosynthesis. Catalyzes the initial step of the lipid cycle reactions in the biosynthesis of the cell wall peptidoglycan: transfers peptidoglycan precursor phospho-MurNAc-pentapeptide from UDP-MurNAc-pentapeptide onto the lipid carrier undecaprenyl phosphate, yielding undecaprenyl-pyrophosphoryl-MurNAc-pentapeptide, known as lipid I. The chain is Phospho-N-acetylmuramoyl-pentapeptide-transferase from Rickettsia prowazekii (strain Madrid E).